We begin with the raw amino-acid sequence, 140 residues long: uncharacterized protein (140 aa).

This is an uncharacterized protein from Neurospora crassa (strain ATCC 24698 / 74-OR23-1A / CBS 708.71 / DSM 1257 / FGSC 987).